Consider the following 643-residue polypeptide: Thread biopolymer filament subunit alpha (643 aa).

Residues 1–13 (MSISQTVSKSYTK) are compositionally biased toward polar residues. Residues 1-34 (MSISQTVSKSYTKSVSRGGQGVSYSQSSSHKVGG) form a disordered region. Positions 1–191 (MSISQTVSKS…PDTVQHTRIR (191 aa)) are head. Residues 14 to 31 (SVSRGGQGVSYSQSSSHK) show a composition bias toward low complexity. The region spanning 192 to 510 (EKQDLQTLNT…KLLDSEETRI (319 aa)) is the IF rod domain. The coil 1A stretch occupies residues 193–227 (KQDLQTLNTKFANLVDQVRTLEQHNAILKAQISMI). The interval 228-240 (TSPSDTPEGPVNT) is linker 1. Positions 241–341 (AVVASTVTAT…YNARVREVQA (101 aa)) are coil 1B. The linker 12 stretch occupies residues 342 to 362 (AVTGGPTAAYSIRVDNTHQAI). The coil 2A stretch occupies residues 363-381 (DLTTSLQEMKTHYEVLATK). Positions 382-389 (SREEAFTQ) are linker 2. The interval 390–510 (VQPRIQEMAV…KLLDSEETRI (121 aa)) is coil 2B. Residues 511 to 643 (SHGGGITITT…SSARSSSRIY (133 aa)) form a tail region. The disordered stretch occupies residues 622 to 643 (SRAGYSASRKSYSSARSSSRIY).

It belongs to the intermediate filament family. As to quaternary structure, coiled-coil heterodimer of an alpha and a gamma subunit. Assemble into 10 nm filaments. Forms a massive, conical, intermediate filament biopolymer of approximately 60 cm.

The protein localises to the secreted. The protein resides in the extracellular space. Functionally, released extracellularly into seawater and provides physical and biological defense against invasive organism by modulation of the viscoelastic properties of mucus. The chain is Thread biopolymer filament subunit alpha from Eptatretus stoutii (Pacific hagfish).